The following is a 296-amino-acid chain: Cadherin-4 (296 aa).

Cadherin domains lie at 1-101 (NVPE…RPEF), 102-216 (INQV…PPEF), and 217-296 (TTST…MLTI). Residues 1-296 (NVPENSRGPF…ELNRAFMLTI (296 aa)) are Extracellular-facing. Asparagine 107 and asparagine 236 each carry an N-linked (GlcNAc...) asparagine glycan.

The protein resides in the cell membrane. In terms of biological role, cadherins are calcium-dependent cell adhesion proteins. They preferentially interact with themselves in a homophilic manner in connecting cells; cadherins may thus contribute to the sorting of heterogeneous cell types. May play an important role in retinal development. The sequence is that of Cadherin-4 (Cdh4) from Rattus norvegicus (Rat).